The chain runs to 79 residues: Acyl carrier protein (79 aa).

Positions 2–77 (SDIEARVKKI…LAIDYAKNNV (76 aa)) constitute a Carrier domain. Position 37 is an O-(pantetheine 4'-phosphoryl)serine (Ser37).

Belongs to the acyl carrier protein (ACP) family. In terms of processing, 4'-phosphopantetheine is transferred from CoA to a specific serine of apo-ACP by AcpS. This modification is essential for activity because fatty acids are bound in thioester linkage to the sulfhydryl of the prosthetic group.

It is found in the cytoplasm. It participates in lipid metabolism; fatty acid biosynthesis. Its function is as follows. Carrier of the growing fatty acid chain in fatty acid biosynthesis. In Leptothrix cholodnii (strain ATCC 51168 / LMG 8142 / SP-6) (Leptothrix discophora (strain SP-6)), this protein is Acyl carrier protein.